A 369-amino-acid chain; its full sequence is Superinfection exclusion protein (369 aa).

A signal peptide spans 1–15; it reads MIALLILSLTCSAST.

This sequence belongs to the serpin family. Orthopoxvirus OPG040 subfamily. In terms of assembly, interacts with A56 protein.

The protein localises to the virion membrane. The protein resides in the host cell membrane. Prevents cell to cell fusion via its interaction with A56 protein. The A56-K2 complex associates with components of the entry fusion complex (EFC) presumably to avoid superinfection and syncytium formation. This is Superinfection exclusion protein (OPG040) from Vaccinia virus (strain Ankara) (VACV).